The chain runs to 550 residues: Integral membrane protein DGCR2/IDD (550 aa).

Residues 1–20 form the signal peptide; that stretch reads MVPKADSGAFLLLFLLVLTV. Over 21–349 the chain is Extracellular; the sequence is TEPLRPELRC…LFDSMASGMR (329 aa). Residues 28 to 68 form the LDL-receptor class A domain; sequence LRCNPGQFACRSGTIQCIPLPWQCDGWATCEDESDEANCPE. Intrachain disulfides connect C30–C44, C37–C57, and C51–C66. Residues 69–92 are disordered; it reads VTGEVRPHHGKEAVDPRQGRARGG. A compositionally biased stretch (basic and acidic residues) spans 71-92; the sequence is GEVRPHHGKEAVDPRQGRARGG. A C-type lectin domain is found at 115–241; sequence CPTGWHHYEG…FCAQLQCFHF (127 aa). Cystine bridges form between C145-C265 and C233-C257. N149 and N196 each carry an N-linked (GlcNAc...) asparagine glycan. The 64-residue stretch at 270 to 333 folds into the VWFC domain; it reads TCVDIKDNVV…PKECCKFMCL (64 aa). A helical transmembrane segment spans residues 350–368; sequence LVVSCISSFLILSLLLFMV. The Cytoplasmic portion of the chain corresponds to 369–550; it reads HRLRQRRRER…HSRSSLNTVV (182 aa). A Phosphoserine modification is found at S381. The interval 500–550 is disordered; it reads AGASLADLEDSADSSSALLVPPDPAQSGSTPAAEALPGGGRHSRSSLNTVV.

As to expression, predominantly expressed in brain, heart, lung and fetal kidney. Low levels in liver and adult kidney.

It localises to the membrane. Its function is as follows. Putative adhesion receptor, that could be involved in cell-cell or cell-matrix interactions required for normal cell differentiation and migration. This chain is Integral membrane protein DGCR2/IDD (DGCR2), found in Homo sapiens (Human).